The sequence spans 448 residues: O-Mevalon transferase yanI (448 aa).

Asn-2 is a glycosylation site (N-linked (GlcNAc...) asparagine). A run of 8 helical transmembrane segments spans residues 21–41 (VLLS…LLAV), 54–74 (YGLL…PPPP), 79–96 (AVLY…ARYF), 165–185 (FVTA…LVEV), 217–237 (LIVL…VLPL), 316–336 (MLML…SYHV), 350–370 (VKYF…CWLL), and 390–410 (IVTA…PVAL).

This sequence belongs to the wax synthase family.

The protein resides in the membrane. It participates in secondary metabolite biosynthesis; terpenoid biosynthesis. Its function is as follows. O-Mevalon transferase yanI; part of the gene cluster that mediates the biosynthesis of yanuthone D, a fungal isoprenoid epoxycyclohexenone that acts as an antibiotic against fungi and bacteria. The first step of the pathway is the synthesis of 6-methylsalicylic acid (6-MSA) by the polyketide synthase yanA. 6-MSA is then converted to m-cresol by the decarboxylase yanB. The cytochrome P450 monooxygenase yanC then catalyzes the oxidation of m-cresol to toluquinol. Epoxidation of toluquinol is then performed by the short chain dehydrogenase yanD, with the help of yanE, and a further prenylation by yanG leads to 7-deacetoxyyanuthone A. The next step is the hydroxylation of C-22 of 7-deacetoxyyanuthone A by the cytochrome P450 monooxygenase yanH to yield 22-deacetylyanuthone A. O-Mevalon transferase yanI then attaches mevalon to the hydroxyl group of 22-deacetylyanuthone A to produce yanuthone E. Finally, the FAD-dependent monooxygenase yanF oxidizes the hydroxyl group at C15 of yanuthone E to form yanuthone D. Furthermore, several branching points in the pathway lead to the production of yanuthones F and G from 7-deacetoxyyanuthone A; yanuthones H and I from 22-deacetylyanuthone A; and yanuthone J from yanuthone E. This is O-Mevalon transferase yanI from Aspergillus niger (strain ATCC 1015 / CBS 113.46 / FGSC A1144 / LSHB Ac4 / NCTC 3858a / NRRL 328 / USDA 3528.7).